The following is a 180-amino-acid chain: MDSINSSIYFCAYFRELIIKLLMAPLGVSGLVGKLSTELEVDCDAEKYYNMYKHGEDVQKAVPHLCVDVKVISGDPTRSGCIKEWNVNIDGKTIRSVEETTHNDETKTLRHRVFEGDMMKDFKKFDTIMVVNPKPDGNGCVVTRSIEYEKTNENSPTPFDYLQFGHQAIEDMNKYLRDSE.

Ser-96 lines the thebaine pocket. Catalysis depends on His-111, which acts as the Proton acceptor. Thr-127 is a thebaine binding site.

This sequence belongs to the MLP family. Homodimer (allosteric) and oligomers. As to expression, expressed in poppy latex.

It carries out the reaction (7S)-O-acetylsalutaridinol = thebaine + acetate + H(+). It participates in alkaloid biosynthesis; morphine biosynthesis. Functionally, catalyzes the formation of thebaine from (7S)-salutaridinol 7-O-acetate at the expense of labile hydroxylated by-products, which are preferentially produced by spontaneous allylic elimination. In Papaver somniferum (Opium poppy), this protein is Thebaine synthase 1.